We begin with the raw amino-acid sequence, 50 residues long: Protein PndA (50 aa).

Residues 5–25 (TFLMMLIVVCVTILCFVWMVR) traverse the membrane as a helical segment.

The protein belongs to the Hok/Gef family.

The protein localises to the cell inner membrane. When overexpressed kill the cells from the inside by interfering with a vital function in the cell membrane. Functionally, toxic component of a type I toxin-antitoxin (TA) system. When expressed is involved in cellular Mg(2+) release and degradation of stable RNA. The chain is Protein PndA (pndA) from Escherichia coli.